Consider the following 667-residue polypeptide: Protein angel homolog 1 (667 aa).

S77 and S105 each carry phosphoserine.

Belongs to the CCR4/nocturin family.

The sequence is that of Protein angel homolog 1 from Rattus norvegicus (Rat).